Here is a 435-residue protein sequence, read N- to C-terminus: Serine--tRNA ligase (435 aa).

L-serine is bound at residue 233 to 235 (TAE). 264 to 266 (RAE) provides a ligand contact to ATP. E287 serves as a coordination point for L-serine. Residue 351–354 (EISS) coordinates ATP. An L-serine-binding site is contributed by S386.

This sequence belongs to the class-II aminoacyl-tRNA synthetase family. Type-1 seryl-tRNA synthetase subfamily. Homodimer. The tRNA molecule binds across the dimer.

It is found in the cytoplasm. It catalyses the reaction tRNA(Ser) + L-serine + ATP = L-seryl-tRNA(Ser) + AMP + diphosphate + H(+). The catalysed reaction is tRNA(Sec) + L-serine + ATP = L-seryl-tRNA(Sec) + AMP + diphosphate + H(+). Its pathway is aminoacyl-tRNA biosynthesis; selenocysteinyl-tRNA(Sec) biosynthesis; L-seryl-tRNA(Sec) from L-serine and tRNA(Sec): step 1/1. Functionally, catalyzes the attachment of serine to tRNA(Ser). Is also able to aminoacylate tRNA(Sec) with serine, to form the misacylated tRNA L-seryl-tRNA(Sec), which will be further converted into selenocysteinyl-tRNA(Sec). The chain is Serine--tRNA ligase from Anaeromyxobacter dehalogenans (strain 2CP-C).